Consider the following 609-residue polypeptide: UvrABC system protein C (609 aa).

The GIY-YIG domain maps to 13 to 91; that stretch reads HQPGVYRMFD…IKAFQPRYNV (79 aa). Residues 201–236 enclose the UVR domain; sequence QQVLEHLIKKMEQASMQLNFEQAAYFRDQIQAIRAV.

The protein belongs to the UvrC family. In terms of assembly, interacts with UvrB in an incision complex.

The protein resides in the cytoplasm. Its function is as follows. The UvrABC repair system catalyzes the recognition and processing of DNA lesions. UvrC both incises the 5' and 3' sides of the lesion. The N-terminal half is responsible for the 3' incision and the C-terminal half is responsible for the 5' incision. This chain is UvrABC system protein C, found in Histophilus somni (strain 129Pt) (Haemophilus somnus).